The sequence spans 541 residues: Protein wntless homolog (541 aa).

The Cytoplasmic segment spans residues 1–15; sequence MAGAIIENMSTKKLC. A helical membrane pass occupies residues 16 to 36; the sequence is IVGGILLVFQIVAFLVGGLIA. At 37-232 the chain is on the lumenal side; sequence PAPTTAVSYV…GIHQNGGFTK (196 aa). Residues 101–202 are interaction with Wnt proteins; it reads MEMSPWFQFM…KYYLLNIRLP (102 aa). Residues 233–253 traverse the membrane as a helical segment; sequence VWFAMKTFLTPSIFIIMVWYW. Topologically, residues 254 to 268 are cytoplasmic; it reads RRITMMSRPPVLLEK. A helical transmembrane segment spans residues 269 to 289; that stretch reads VIFALGISMTFINIPVEWFSI. Residues 290–303 are Lumenal-facing; that stretch reads GFDWTWMLLFGDIR. The helical transmembrane segment at 304–324 threads the bilayer; sequence QGIFYAMLLSFWIIFCGEHMM. Over 325–331 the chain is Cytoplasmic; that stretch reads DQHERNH. Residues 332 to 352 traverse the membrane as a helical segment; that stretch reads IAGYWKQVGPIAVGSFCLFIF. The Lumenal segment spans residues 353–380; that stretch reads DMCERGVQLTNPFYSIWTTDVGTELAMA. The chain crosses the membrane as a helical span at residues 381–401; the sequence is FIIVAGICLCLYFLFLCFMVF. At 402 to 431 the chain is on the cytoplasmic side; the sequence is QVFRNISGKQSSLPAMSKVRRLHYEGLIFR. Residues 432–452 traverse the membrane as a helical segment; that stretch reads FKFLMLITLACAAMTVIFFIV. Residues 453-471 lie on the Lumenal side of the membrane; the sequence is SQVTEGHWKWGGVTVQVSS. A helical membrane pass occupies residues 472–492; sequence AFFTGIYGMWNLYVFALMFLY. Topologically, residues 493–541 are cytoplasmic; the sequence is APSHKNYGEDQSNGDLGVHSGEELQLTTTITHVDGPTEIYKLTRKEAQE.

This sequence belongs to the wntless family. As to quaternary structure, interacts with WNT3A. Interacts with WNT1, WNT3 and WNT5A. Post-translationally, N-glycosylated. As to expression, expressed in the brain, skeletal muscle, heart muscle, lung, gut, liver, and kidney (at protein level). In the brain, expressed in the cortex, striatum, ventral tegmentum, nucleus accumbens and to a lesser extent in the Purkinjie cells in the cerebellum. Expressed in eye iridocorneal angle.

The protein resides in the golgi apparatus membrane. Its subcellular location is the cytoplasmic vesicle membrane. It localises to the cell membrane. The protein localises to the endoplasmic reticulum membrane. It is found in the early endosome membrane. Functionally, regulates Wnt proteins sorting and secretion in a feedback regulatory mechanism. This reciprocal interaction plays a key role in the regulation of expression, subcellular location, binding and organelle-specific association of Wnt proteins. Also plays an important role in establishment of the anterior-posterior body axis formation during development. The protein is Protein wntless homolog (Wls) of Rattus norvegicus (Rat).